The primary structure comprises 950 residues: Leucine--tRNA ligase (950 aa).

The short motif at 66–77 (PYPSGAGLHVGH) is the 'HIGH' region element. A 'KMSKS' region motif is present at residues 721–725 (KIGKS). ATP is bound at residue lysine 724.

This sequence belongs to the class-I aminoacyl-tRNA synthetase family.

It localises to the cytoplasm. It carries out the reaction tRNA(Leu) + L-leucine + ATP = L-leucyl-tRNA(Leu) + AMP + diphosphate. The chain is Leucine--tRNA ligase from Nocardia farcinica (strain IFM 10152).